A 316-amino-acid chain; its full sequence is NAD kinase 1 (316 aa).

Residue Asp-67 is the Proton acceptor of the active site. Residue 67–68 (DG) coordinates NAD(+). The interval 132 to 151 (RSAEERADAPTPLQQPDVED) is disordered. Residues 160-161 (ND), Arg-190, and Asp-192 each bind NAD(+).

This sequence belongs to the NAD kinase family. A divalent metal cation is required as a cofactor.

The protein localises to the cytoplasm. The enzyme catalyses NAD(+) + ATP = ADP + NADP(+) + H(+). Functionally, involved in the regulation of the intracellular balance of NAD and NADP, and is a key enzyme in the biosynthesis of NADP. Catalyzes specifically the phosphorylation on 2'-hydroxyl of the adenosine moiety of NAD to yield NADP. This is NAD kinase 1 from Parasynechococcus marenigrum (strain WH8102).